Consider the following 342-residue polypeptide: Photosystem II D2 protein (342 aa).

Residues 1 to 29 lie on the Cytoplasmic side of the membrane; sequence ERGWFDILDDWLKRDRFVFVGWSGILLFP. Residues 30–50 traverse the membrane as a helical segment; sequence CAYLALGGWLTGTTFVTSWYT. The Lumenal portion of the chain corresponds to 51 to 113; that stretch reads HGLASSYLEG…IALHGAFGLI (63 aa). H107 provides a ligand contact to chlorophyll a. A helical transmembrane segment spans residues 114-130; that stretch reads GFMLRQFEIARLVGVRP. Positions 119 and 132 each coordinate pheophytin a. The Cytoplasmic portion of the chain corresponds to 131-141; sequence YNAIAFSAPIA. A helical membrane pass occupies residues 142–155; the sequence is VFVSVFLIYPLGQS. Topologically, residues 156 to 196 are lumenal; sequence SWFFAPSFGVAAIFRFLLFFQGFHNWTLNPFHMMGVAGVLG. Chlorophyll a is bound at residue H187. Residues 197-217 traverse the membrane as a helical segment; the sequence is GALLCAIHGATVENTLFQDGE. H204 and F251 together coordinate a plastoquinone. Fe cation is bound at residue H204. Residues 218–267 lie on the Cytoplasmic side of the membrane; sequence GASTFRAFNPTQAEETYSMVTANRFWSQIFGIAFSNKRWLHFFMLFVPVT. H258 is a Fe cation binding site. A helical transmembrane segment spans residues 268–284; the sequence is GLWMSAIGVVGLALNLR. Residues 285–342 lie on the Lumenal side of the membrane; sequence SYDFISQEIRAAEDPEFETFYTKNLLLNEGIRAWMAPQDQPHENFVFPEEVLPRGNAL.

This sequence belongs to the reaction center PufL/M/PsbA/D family. In terms of assembly, PSII is composed of 1 copy each of membrane proteins PsbA, PsbB, PsbC, PsbD, PsbE, PsbF, PsbH, PsbI, PsbJ, PsbK, PsbL, PsbM, PsbT, PsbX, PsbY, PsbZ, Psb30/Ycf12, peripheral proteins PsbO, CyanoQ (PsbQ), PsbU, PsbV and a large number of cofactors. It forms dimeric complexes. The D1/D2 heterodimer binds P680, chlorophylls that are the primary electron donor of PSII, and subsequent electron acceptors. It shares a non-heme iron and each subunit binds pheophytin, quinone, additional chlorophylls, carotenoids and lipids. There is also a Cl(-1) ion associated with D1 and D2, which is required for oxygen evolution. The PSII complex binds additional chlorophylls, carotenoids and specific lipids. serves as cofactor.

The protein localises to the cellular thylakoid membrane. It carries out the reaction 2 a plastoquinone + 4 hnu + 2 H2O = 2 a plastoquinol + O2. Photosystem II (PSII) is a light-driven water:plastoquinone oxidoreductase that uses light energy to abstract electrons from H(2)O, generating O(2) and a proton gradient subsequently used for ATP formation. It consists of a core antenna complex that captures photons, and an electron transfer chain that converts photonic excitation into a charge separation. The D1/D2 (PsbA/PsbD) reaction center heterodimer binds P680, the primary electron donor of PSII as well as several subsequent electron acceptors. D2 is needed for assembly of a stable PSII complex. This Thermostichus vulcanus (Synechococcus vulcanus) protein is Photosystem II D2 protein.